We begin with the raw amino-acid sequence, 531 residues long: Protein arginine N-methyltransferase 3 (531 aa).

Residues 1-43 (MCSLASGATGGRGAVENEEDLPELSDSGDEAAWEDEDDADLPH) form a disordered region. C2 bears the N-acetylcysteine mark. The segment covering 16-39 (ENEEDLPELSDSGDEAAWEDEDDA) has biased composition (acidic residues). Phosphoserine is present on residues S25 and S27. A C2H2-type zinc finger spans residues 48-71 (TPCLFCNRLFTSAEETFSHCKSEH). The segment at 48–71 (TPCLFCNRLFTSAEETFSHCKSEH) is interaction with ZNF200. At S171 the chain carries Phosphoserine. Residues 186-531 (MKQFAQDFVM…NNSTQTYGLQ (346 aa)) are mediates interaction with ALDH1A1. In terms of domain architecture, SAM-dependent MTase PRMT-type spans 217–531 (DGVYFSSYGH…NNSTQTYGLQ (315 aa)). The S-adenosyl-L-homocysteine site is built by R239, G263, D285, I313, and E314. Active-site residues include E329 and E338. S343 contributes to the S-adenosyl-L-homocysteine binding site.

Belongs to the class I-like SAM-binding methyltransferase superfamily. Protein arginine N-methyltransferase family. Monomer and homodimer. Interacts with EPB41L3 (via FERM domain); the interaction is direct and inhibits the protein-arginine N-methyltransferase activity of PRMT3. Interacts with the 40S ribosomal protein RPS2. Interacts with ALDH1A1; the interaction is direct, inhibits ALDH1A1 aldehyde dehydrogenase activity and is independent of the methyltransferase activity of PRMT3. Interacts (via zinc-finger) with ZNF200 (via C-terminus); the interaction is direct and required to localize PRMT3 to the nucleus and inhibit its proteasomal degradation.

It is found in the cytoplasm. The protein localises to the cytosol. Its subcellular location is the nucleus. The catalysed reaction is L-arginyl-[protein] + S-adenosyl-L-methionine = N(omega)-methyl-L-arginyl-[protein] + S-adenosyl-L-homocysteine + H(+). The enzyme catalyses L-arginyl-[protein] + 2 S-adenosyl-L-methionine = N(omega),N(omega)-dimethyl-L-arginyl-[protein] + 2 S-adenosyl-L-homocysteine + 2 H(+). Inhibited by N-ethylmaleimide and high concentrations of zinc chloride. Allosterically inhibited by SGC707. Allosterically inhibited by (1-(benzo[d][1,2,3]thiadiazol- 6-yl)-3-(2-cyclohexenylethyl)urea) and derivatives thereof. Functionally, protein-arginine N-methyltransferase that catalyzes both the monomethylation and asymmetric dimethylation of the guanidino nitrogens of arginine residues in target proteins, and therefore falls into the group of type I methyltransferases. Catalyzes the asymmetric arginine dimethylation at multiple sites in the Arg/Gly-rich region of small ribosomal subunit protein uS5/RPS2. Also appears to methylate other ribosomal proteins. May regulate retinoic acid synthesis and signaling by inhibiting ALDH1A1 retinal dehydrogenase activity. Contributes to methylation of histone H4 'Arg-3', a specific tag for epigenetic transcriptional activation. Mediates asymmetric arginine dimethylation of histone H4 'Arg-3' (H4R3me2a) in the promoter region of miRNA miR-3648, to promote its transcription and osteogenesis. In Homo sapiens (Human), this protein is Protein arginine N-methyltransferase 3.